The sequence spans 193 residues: Major structural subunit of bundle-forming pilus (193 aa).

A propeptide spans 1–13 (MVSKIMNKKYEKG) (leader sequence). Leu-14 is subject to N-methylleucine. Residues 14–35 (LSLIESAMVLALAATVTAGVMF) form a helical membrane-spanning segment. A disulfide bond links Cys-129 and Cys-179.

Belongs to the N-Me-Phe pilin family. As to quaternary structure, 10 to 100 laterally aligned filaments or bundle-forming pili coalesce into rope-like bundles. These form linkages between the bacteria within the enteropathogenic E.coli (EPEC) microcolonies that are attached to epithelial cells.

Its subcellular location is the fimbrium. The protein localises to the membrane. Major component of type IV bundle-forming pili (BFP) that plays a role in adherence to host cells and virulence. In Escherichia coli O127:H6 (strain E2348/69 / EPEC), this protein is Major structural subunit of bundle-forming pilus (bfpA).